A 382-amino-acid polypeptide reads, in one-letter code: V-type proton ATPase subunit C 1 (382 aa).

T2 bears the N-acetylthreonine mark.

This sequence belongs to the V-ATPase C subunit family. V-ATPase is a heteromultimeric enzyme made up of two complexes: the ATP-hydrolytic V1 complex and the proton translocation V0 complex. The V1 complex consists of three catalytic AB heterodimers that form a heterohexamer, three peripheral stalks each consisting of EG heterodimers, one central rotor including subunits D and F, and the regulatory subunits C and H. The proton translocation complex V0 consists of the proton transport subunit a, a ring of proteolipid subunits c9c'', rotary subunit d, subunits e and f, and the accessory subunits ATP6AP1/Ac45 and ATP6AP2/PRR.

The protein localises to the cytoplasmic vesicle. It localises to the secretory vesicle. The protein resides in the synaptic vesicle membrane. It is found in the clathrin-coated vesicle membrane. Functionally, subunit of the V1 complex of vacuolar(H+)-ATPase (V-ATPase), a multisubunit enzyme composed of a peripheral complex (V1) that hydrolyzes ATP and a membrane integral complex (V0) that translocates protons. V-ATPase is responsible for acidifying and maintaining the pH of intracellular compartments and in some cell types, is targeted to the plasma membrane, where it is responsible for acidifying the extracellular environment. Subunit C is necessary for the assembly of the catalytic sector of the enzyme and is likely to have a specific function in its catalytic activity. This chain is V-type proton ATPase subunit C 1 (ATP6V1C1), found in Macaca fascicularis (Crab-eating macaque).